A 97-amino-acid polypeptide reads, in one-letter code: Putative ankyrin repeat protein RBE_0357 (97 aa).

An ANK repeat occupies 24 to 54; that stretch reads YGKTALHYAYTKRNIDIIKILLKCPGIKICI.

The sequence is that of Putative ankyrin repeat protein RBE_0357 from Rickettsia bellii (strain RML369-C).